The sequence spans 144 residues: Antigenic protein SchS21 (144 aa).

N-linked (GlcNAc...) asparagine glycosylation occurs at N36. The segment at 91–105 (VKQMWPAESRKPMSG) is igE-binding epitope.

In terms of assembly, homodimer. The cofactor is Mg(2+).

Its subcellular location is the secreted. Its function is as follows. Has exodeoxyribonuclease activity with lambda-DNA and salmon testes dsDNA. No activity with circular plasmid DNA. The physiological role of this enzyme may be to degrade environmental DNA, and thus mobilize nitrogen for uptake. The sequence is that of Antigenic protein SchS21 from Stachybotrys chartarum (Toxic black mold).